A 575-amino-acid chain; its full sequence is Protein AUXIN SIGNALING F-BOX 2 (575 aa).

Residues 1 to 47 (MNYFPDEVIEHVFDFVTSHKDRNAISLVCKSWYKIERYSRQKVFIGN) form the F-box domain. Lys69 contributes to the 1D-myo-inositol hexakisphosphate binding site. The tract at residues 76 to 77 (DF) is interaction with auxin-responsive proteins. 1D-myo-inositol hexakisphosphate contacts are provided by residues 108–109 (KR) and Arg340. The interaction with auxin-responsive proteins stretch occupies residues 343–348 (PSDLLG). 396–398 (RFR) serves as a coordination point for 1D-myo-inositol hexakisphosphate. An interaction with auxin-responsive proteins region spans residues 400-404 (CILEP). Residue Arg431 participates in 1D-myo-inositol hexakisphosphate binding. The interaction with auxin-responsive proteins stretch occupies residues 459 to 460 (AF). 1D-myo-inositol hexakisphosphate contacts are provided by residues 479–480 (KK) and Arg504.

Part of a SCF (SKP1-cullin-F-box) protein ligase complex. Interacts with Aux/IAA proteins (IAA7) in an auxin-dependent manner. Ubiquitous, with higher levels in seedlings.

Its subcellular location is the nucleus. It participates in protein modification; protein ubiquitination. Functionally, component of SCF(ASK-cullin-F-box) E3 ubiquitin ligase complexes, which may mediate the ubiquitination and subsequent proteasomal degradation of target proteins. Confers sensitivity to the virulent bacterial pathogen P.syringae. Auxin receptor that mediates Aux/IAA proteins proteasomal degradation and auxin-regulated transcription. Involved in embryogenesis regulation by auxin. The protein is Protein AUXIN SIGNALING F-BOX 2 (AFB2) of Arabidopsis thaliana (Mouse-ear cress).